A 230-amino-acid polypeptide reads, in one-letter code: TorCAD operon transcriptional regulatory protein TorR (230 aa).

In terms of domain architecture, Response regulatory spans His-4–Leu-117. 4-aspartylphosphate is present on Asp-53. A DNA-binding region (ompR/PhoB-type) is located at residues Asp-132–Ala-227.

In terms of assembly, interacts with TorI. TorI binds to the effector domain of TorR. This interaction, which does not interfere with TorR DNA binding activity, probably prevents the recruitment of RNA polymerase to the torCAD promoter. Phosphorylated and dephosphorylated by TorS.

The protein resides in the cytoplasm. Member of the two-component regulatory system TorS/TorR involved in the anaerobic utilization of trimethylamine-N-oxide (TMAO). Phosphorylated TorR activates the transcription of the torCAD operon by binding to four decameric boxes located in the torCAD promoter. Box1, 2 and 4 contain the DNA sequence 5'-CTGTTCATAT-3' and box3 contains the DNA sequence 5'-CCGTTCATCC-3'. Phosphorylated as well as unphosphorylated TorR negatively regulates its own expression by binding to box1 and 2. This is TorCAD operon transcriptional regulatory protein TorR (torR) from Escherichia coli (strain K12).